The following is a 433-amino-acid chain: Beta-agarase AgaA (433 aa).

The signal sequence occupies residues 1 to 20 (MRKITSILLTCVMGCTATYA). Residues 21-295 (ADWDGVPVPA…WVRFYKPVPI (275 aa)) enclose the GH16 domain. The active-site Nucleophile is the Glu-147. The active-site Proton donor is Glu-152. The region spanning 300–431 (TTVELGNFHN…QWNGDEIRFV (132 aa)) is the CBM6 domain.

This sequence belongs to the glycosyl hydrolase 16 family. Monomer.

Its subcellular location is the periplasm. It catalyses the reaction Hydrolysis of (1-&gt;4)-beta-D-galactosidic linkages in agarose, giving the tetramer as the predominant product.. With respect to regulation, activity is abolished by Hg(2+), Cu(2+), Pb(2+) and Zn(2+) ions, but is not affected by NaCl up to at least 1.0 M, Mg(2+), K(+) and Ca(2+). Not affected by iodoacetamide, p-chloromercuribenzoate, dithiothreitol, 2-mercaptoethanol, EDTA and sodium dodecyl sulfate. Inhibited by N-bromosuccinimide. Functionally, endo-type beta-agarase, which produces neoagarotetraose (NA4) as the main final product, with a small amount of neoagarohexaose (NA6) and neoagarobiose (NA2). This Microbulbifer thermotolerans protein is Beta-agarase AgaA.